The primary structure comprises 190 residues: Selenoprotein S (190 aa).

Residues 28-48 (SLLATYGWYIVFCCILLYVVF) form a helical membrane-spanning segment. The segment at 78 to 90 (RQEALAAARLKMQ) is VCP/p97-interacting motif (VIM). Over residues 115–138 (KIERWDSVQEGRSYRGDARKRQEE) the composition is skewed to basic and acidic residues. Residues 115-190 (KIERWDSVQE…RRGPSSGGUG (76 aa)) form a disordered region. A Phosphoserine modification is found at Ser140. A compositionally biased stretch (gly residues) spans 160–174 (RGGGYNPLSGEGGGA). A non-standard amino acid (selenocysteine) is located at residue Sec189.

The protein belongs to the selenoprotein S family. As to quaternary structure, interacts with DERL1 and (via VIM motif) with VCP, suggesting that it forms a membrane complex with DERL1 that serves as a receptor for VCP. Also interacts with DERL2, DERL3 and SELENOK. The SELENOK-SELENOS complex interacts with VCP. In terms of processing, truncated SELENOS proteins produced by failed UGA/Sec decoding are ubiquitinated by the CRL2(KLHDC2) and CRL2(KLHDC3) complexes, which recognizes the glycine (Gly) at the C-terminus of truncated SELENOS proteins. Truncated SELENOS proteins produced by failed UGA/Sec decoding are also ubiquitinated by the CRL5(KLHDC1) complex. In terms of tissue distribution, ubiquitously expressed. Highest expression in liver and lung, with lower levels detected in spleen, kidney, brain, lymph nodes, small intestine, stomach and heart. Very low expression detected in longissimus dorsi.

The protein localises to the cytoplasm. Its subcellular location is the endoplasmic reticulum membrane. Functionally, involved in the degradation process of misfolded endoplasmic reticulum (ER) luminal proteins. Participates in the transfer of misfolded proteins from the ER to the cytosol, where they are destroyed by the proteasome in a ubiquitin-dependent manner. Probably acts by serving as a linker between DERL1, which mediates the retrotranslocation of misfolded proteins into the cytosol, and the ATPase complex VCP, which mediates the translocation and ubiquitination. The sequence is that of Selenoprotein S from Sus scrofa (Pig).